Consider the following 466-residue polypeptide: Glutamate--tRNA ligase (466 aa).

Residues 10–20 (PSPTGYLHVGG) carry the 'HIGH' region motif. The Zn(2+) site is built by cysteine 99, cysteine 101, cysteine 126, and histidine 128. Positions 237 to 241 (RLSKR) match the 'KMSKS' region motif. Residue lysine 240 coordinates ATP.

This sequence belongs to the class-I aminoacyl-tRNA synthetase family. Glutamate--tRNA ligase type 1 subfamily. Monomer. The cofactor is Zn(2+).

It is found in the cytoplasm. It carries out the reaction tRNA(Glu) + L-glutamate + ATP = L-glutamyl-tRNA(Glu) + AMP + diphosphate. Catalyzes the attachment of glutamate to tRNA(Glu) in a two-step reaction: glutamate is first activated by ATP to form Glu-AMP and then transferred to the acceptor end of tRNA(Glu). In Trichlorobacter lovleyi (strain ATCC BAA-1151 / DSM 17278 / SZ) (Geobacter lovleyi), this protein is Glutamate--tRNA ligase.